A 314-amino-acid polypeptide reads, in one-letter code: Aspartate carbamoyltransferase catalytic subunit (314 aa).

Positions 58 and 59 each coordinate carbamoyl phosphate. Lysine 86 is an L-aspartate binding site. Residues arginine 108, histidine 136, and glutamine 139 each coordinate carbamoyl phosphate. L-aspartate-binding residues include arginine 169 and arginine 223. 2 residues coordinate carbamoyl phosphate: glycine 264 and proline 265.

This sequence belongs to the aspartate/ornithine carbamoyltransferase superfamily. ATCase family. In terms of assembly, heterododecamer (2C3:3R2) of six catalytic PyrB chains organized as two trimers (C3), and six regulatory PyrI chains organized as three dimers (R2).

The enzyme catalyses carbamoyl phosphate + L-aspartate = N-carbamoyl-L-aspartate + phosphate + H(+). The protein operates within pyrimidine metabolism; UMP biosynthesis via de novo pathway; (S)-dihydroorotate from bicarbonate: step 2/3. Its function is as follows. Catalyzes the condensation of carbamoyl phosphate and aspartate to form carbamoyl aspartate and inorganic phosphate, the committed step in the de novo pyrimidine nucleotide biosynthesis pathway. This chain is Aspartate carbamoyltransferase catalytic subunit, found in Roseobacter denitrificans (strain ATCC 33942 / OCh 114) (Erythrobacter sp. (strain OCh 114)).